We begin with the raw amino-acid sequence, 355 residues long: NADH dehydrogenase [ubiquinone] 1 alpha subcomplex subunit 10, mitochondrial (355 aa).

The N-terminal 35 residues, Met1 to Lys35, are a transit peptide targeting the mitochondrion. An N6-acetyllysine; alternate modification is found at Lys122. The residue at position 122 (Lys122) is an N6-succinyllysine; alternate. At Ser250 the chain carries Phosphoserine; by PINK1. Lys285 carries the N6-succinyllysine modification.

It belongs to the complex I NDUFA10 subunit family. As to quaternary structure, complex I is composed of 45 different subunits. This a component of the hydrophobic protein fraction. Requires FAD as cofactor. In terms of processing, phosphorylation at Ser-250 by PINK1 is required for the binding and/or reduction of the complex I substrate ubiquinone. In terms of tissue distribution, expressed in the head and flagellum of epididymal sperm but not in testicular sperm (at protein level).

It localises to the mitochondrion matrix. Accessory subunit of the mitochondrial membrane respiratory chain NADH dehydrogenase (Complex I), that is believed not to be involved in catalysis. Complex I functions in the transfer of electrons from NADH to the respiratory chain. The immediate electron acceptor for the enzyme is believed to be ubiquinone. The chain is NADH dehydrogenase [ubiquinone] 1 alpha subcomplex subunit 10, mitochondrial (Ndufa10) from Rattus norvegicus (Rat).